We begin with the raw amino-acid sequence, 141 residues long: Nucleoside triphosphatase NudI (141 aa).

One can recognise a Nudix hydrolase domain in the interval 1 to 141 (MRQRTIVCPL…RHTLALKGLL (141 aa)). The Nudix box motif lies at 38–59 (GGVEPGERIEEALRREIREELG).

It belongs to the Nudix hydrolase family. NudI subfamily. Monomer. Requires Mg(2+) as cofactor.

The enzyme catalyses a ribonucleoside 5'-triphosphate + H2O = a ribonucleoside 5'-phosphate + diphosphate + H(+). It carries out the reaction a 2'-deoxyribonucleoside 5'-triphosphate + H2O = a 2'-deoxyribonucleoside 5'-phosphate + diphosphate + H(+). It catalyses the reaction dUTP + H2O = dUMP + diphosphate + H(+). The catalysed reaction is dTTP + H2O = dTMP + diphosphate + H(+). The enzyme catalyses dCTP + H2O = dCMP + diphosphate + H(+). Its function is as follows. Catalyzes the hydrolysis of nucleoside triphosphates, with a preference for pyrimidine deoxynucleoside triphosphates (dUTP, dTTP and dCTP). This Salmonella newport (strain SL254) protein is Nucleoside triphosphatase NudI.